The sequence spans 151 residues: tRNA-specific adenosine deaminase (151 aa).

One can recognise a CMP/dCMP-type deaminase domain in the interval 1 to 111 (MGKEYFLKVA…LDKKHGGVVS (111 aa)). H52 is a binding site for Zn(2+). The active-site Proton donor is E54. The Zn(2+) site is built by C82 and C85.

Belongs to the cytidine and deoxycytidylate deaminase family. Homodimer. Zn(2+) is required as a cofactor.

The catalysed reaction is adenosine(34) in tRNA + H2O + H(+) = inosine(34) in tRNA + NH4(+). Catalyzes the deamination of adenosine to inosine at the wobble position 34 of tRNA(Arg2). This Aquifex aeolicus (strain VF5) protein is tRNA-specific adenosine deaminase.